Here is a 177-residue protein sequence, read N- to C-terminus: Probable chemoreceptor glutamine deamidase CheD (177 aa).

The protein belongs to the CheD family.

It catalyses the reaction L-glutaminyl-[protein] + H2O = L-glutamyl-[protein] + NH4(+). In terms of biological role, probably deamidates glutamine residues to glutamate on methyl-accepting chemotaxis receptors (MCPs), playing an important role in chemotaxis. The sequence is that of Probable chemoreceptor glutamine deamidase CheD from Pseudomonas savastanoi pv. phaseolicola (strain 1448A / Race 6) (Pseudomonas syringae pv. phaseolicola (strain 1448A / Race 6)).